A 110-amino-acid polypeptide reads, in one-letter code: Class I hydrophobin 2 (110 aa).

The signal sequence occupies residues 1 to 17 (MQFKFLTTVALATLAVA). Cystine bridges form between C28–C89, C36–C83, C37–C71, and C90–C103. Residue N57 is glycosylated (N-linked (GlcNAc...) asparagine).

This sequence belongs to the fungal hydrophobin family. In terms of assembly, self-assembles to form functional amyloid fibrils called rodlets. Self-assembly into fibrillar rodlets occurs spontaneously at hydrophobic:hydrophilic interfaces and the rodlets further associate laterally to form amphipathic monolayers.

Its subcellular location is the secreted. The protein resides in the cell wall. Functionally, aerial growth, conidiation, and dispersal of filamentous fungi in the environment rely upon a capability of their secreting small amphipathic proteins called hydrophobins (HPBs) with low sequence identity. Class I can self-assemble into an outermost layer of rodlet bundles on aerial cell surfaces, conferring cellular hydrophobicity that supports fungal growth, development and dispersal; whereas Class II form highly ordered films at water-air interfaces through intermolecular interactions but contribute nothing to the rodlet structure. CoH2 is an asexual monokaryon-specific class I hydrophobin that is involved in aerial growth of mycelia. The sequence is that of Class I hydrophobin 2 from Coprinopsis cinerea (Inky cap fungus).